The sequence spans 405 residues: MAVKTLKDLLDEGVDGRHVIVRSDFNVPLNDDREITDKGRIIASLPTLKALSEGGAKVIVMAHLGRPKGEVNEKYSLAPVAEALSDELGQYVALAADVVGEDAHERANGLTEGDILLLENVRFDPRETSKDEAERTAFAQELAALAADNGAFVSDGFGVVHRAQTSVYDIAKLLPHYAGGLVETEISVLEKIAESPEAPYVVVLGGSKVSDKIGVIEALAAKADKIIVGGGMCYTFLAAQGHNVQQSLLQEEMKATCTDLLARFGDKIVLPVDLVAASEFNKDAEKQIVDLDSIPEGWMSLDIGPESVKNFGEVLSTAKTIFWNGPMGVFEFAAFSEGTRGIAQAIIDATAGNDAFSVVGGGDSAASVRVLGLNEDGFSHISTGGGASLEYLEGKELPGVAILAQ.

Substrate-binding positions include 24-26, arginine 40, 63-66, arginine 122, and arginine 162; these read DFN and HLGR. ATP contacts are provided by residues lysine 212, glutamate 331, and 361–364; that span reads GGDS.

The protein belongs to the phosphoglycerate kinase family. As to quaternary structure, monomer.

The protein localises to the cytoplasm. It catalyses the reaction (2R)-3-phosphoglycerate + ATP = (2R)-3-phospho-glyceroyl phosphate + ADP. It participates in carbohydrate degradation; glycolysis; pyruvate from D-glyceraldehyde 3-phosphate: step 2/5. The chain is Phosphoglycerate kinase (pgk) from Corynebacterium glutamicum (strain ATCC 13032 / DSM 20300 / JCM 1318 / BCRC 11384 / CCUG 27702 / LMG 3730 / NBRC 12168 / NCIMB 10025 / NRRL B-2784 / 534).